A 402-amino-acid polypeptide reads, in one-letter code: CCA-adding enzyme (402 aa).

Positions 32 and 35 each coordinate ATP. Residues Gly32 and Arg35 each coordinate CTP. Asp45 and Asp47 together coordinate Mg(2+). The ATP site is built by Arg119, Asp162, Arg165, Arg168, and Arg171. CTP is bound by residues Arg119, Asp162, Arg165, Arg168, and Arg171.

It belongs to the tRNA nucleotidyltransferase/poly(A) polymerase family. Bacterial CCA-adding enzyme type 3 subfamily. As to quaternary structure, homodimer. Requires Mg(2+) as cofactor.

It catalyses the reaction a tRNA precursor + 2 CTP + ATP = a tRNA with a 3' CCA end + 3 diphosphate. It carries out the reaction a tRNA with a 3' CCA end + 2 CTP + ATP = a tRNA with a 3' CCACCA end + 3 diphosphate. Catalyzes the addition and repair of the essential 3'-terminal CCA sequence in tRNAs without using a nucleic acid template. Adds these three nucleotides in the order of C, C, and A to the tRNA nucleotide-73, using CTP and ATP as substrates and producing inorganic pyrophosphate. tRNA 3'-terminal CCA addition is required both for tRNA processing and repair. Also involved in tRNA surveillance by mediating tandem CCA addition to generate a CCACCA at the 3' terminus of unstable tRNAs. While stable tRNAs receive only 3'-terminal CCA, unstable tRNAs are marked with CCACCA and rapidly degraded. In Lactococcus lactis subsp. cremoris (strain MG1363), this protein is CCA-adding enzyme.